The sequence spans 539 residues: G protein-coupled receptor associated sorting protein 3 (539 aa).

Basic residues predominate over residues 1–10 (MTGSKNKARA). Disordered regions lie at residues 1-112 (MTGS…NWFW) and 134-172 (VAKC…EENV). Composition is skewed to basic and acidic residues over residues 66–80 (VVAE…ESKA) and 88–106 (FNHR…DKPS). Residues 134 to 146 (VAKCENKPSTSIQ) show a composition bias toward polar residues.

This sequence belongs to the GPRASP family. Homodimer.

The protein resides in the cytoplasm. It localises to the nucleus. In terms of biological role, survival and differentiation promoting protein that plays a role in the regulation of neurosynaptogenesis. Induces phosphatase PP2A activity which results in APP dephosphorylation and inhibits BACE1-mediated processing of APP. This is G protein-coupled receptor associated sorting protein 3 (Gprasp3) from Mus musculus (Mouse).